The chain runs to 127 residues: UPF0738 protein Bsph_1225 (127 aa).

Belongs to the UPF0738 family.

The sequence is that of UPF0738 protein Bsph_1225 from Lysinibacillus sphaericus (strain C3-41).